We begin with the raw amino-acid sequence, 485 residues long: Chitin synthase regulator 2 (485 aa).

Sel1-like repeat units lie at residues 164–202 (PDAQYFLADCYANGIGTARGKQDFDRAFPLFILAAKHGH), 203–238 (PDACYRAGTCCEHGWGCRRDSAKAVSFYKKAAVGLH), 239–275 (PGAMYRLGTAELNGALGFPRRPKEGVKWLKRSAEHAT), 279–316 (PHALHELALLHERGIENVVFVDNDYAAELLAQSAELGY), 317–353 (APSAFKLGECYEYGKMGCPVDPALSIHYYNISAQQDH), 354–391 (KDACFALTAWYLVGSPGVLPQSDTEAYLWAKKAAELGL), and 392–427 (AKAQYAVGYFTETGIGIEANPQAALTWYKQAAEGGD). The disordered stretch occupies residues 460-485 (AANLAQRSGSGSGASGKDGKDGCLIM). Basic and acidic residues predominate over residues 476-485 (KDGKDGCLIM). A Cysteine methyl ester modification is found at Cys-482. Cys-482 is lipidated: S-farnesyl cysteine. The propeptide at 483–485 (LIM) is removed in mature form.

It belongs to the SKT5 family.

The protein localises to the cell membrane. In terms of biological role, activator of the chitin synthase CHS3 which polymerizes chitin, a structural polymer of the fungal cell wall. Chitin produced by CHS3 is deacetylated to chitosan, which helps to maintain cell wall integrity, anchor melanin, and offers an advantage during infection, as chitosan is less readily detected by host immunosurveillance. In Cryptococcus neoformans var. grubii serotype A (strain H99 / ATCC 208821 / CBS 10515 / FGSC 9487) (Filobasidiella neoformans var. grubii), this protein is Chitin synthase regulator 2.